Consider the following 65-residue polypeptide: uncharacterized protein (65 aa).

The next 2 membrane-spanning stretches (helical) occupy residues 12–31 (IVKW…LIVV) and 41–63 (LVAR…AIIV).

The protein resides in the cell membrane. This is an uncharacterized protein from Halalkalibacterium halodurans (strain ATCC BAA-125 / DSM 18197 / FERM 7344 / JCM 9153 / C-125) (Bacillus halodurans).